We begin with the raw amino-acid sequence, 475 residues long: Ribulose bisphosphate carboxylase large chain (475 aa).

Residues 1–2 (MS) constitute a propeptide that is removed on maturation. N-acetylproline is present on Pro-3. The residue at position 14 (Lys-14) is an N6,N6,N6-trimethyllysine. Substrate is bound by residues Asn-123 and Thr-173. Lys-175 serves as the catalytic Proton acceptor. Lys-177 lines the substrate pocket. Lys-201, Asp-203, and Glu-204 together coordinate Mg(2+). Lys-201 is subject to N6-carboxylysine. The active-site Proton acceptor is His-294. Positions 295, 327, and 379 each coordinate substrate.

It belongs to the RuBisCO large chain family. Type I subfamily. As to quaternary structure, heterohexadecamer of 8 large chains and 8 small chains. Mg(2+) is required as a cofactor.

The protein resides in the plastid. The protein localises to the chloroplast. It catalyses the reaction 2 (2R)-3-phosphoglycerate + 2 H(+) = D-ribulose 1,5-bisphosphate + CO2 + H2O. It carries out the reaction D-ribulose 1,5-bisphosphate + O2 = 2-phosphoglycolate + (2R)-3-phosphoglycerate + 2 H(+). RuBisCO catalyzes two reactions: the carboxylation of D-ribulose 1,5-bisphosphate, the primary event in carbon dioxide fixation, as well as the oxidative fragmentation of the pentose substrate in the photorespiration process. Both reactions occur simultaneously and in competition at the same active site. In Coleochaete orbicularis (Charophycean green alga), this protein is Ribulose bisphosphate carboxylase large chain.